The following is a 114-amino-acid chain: Anti-adapter protein IraM (114 aa).

It belongs to the IraM/RssC family.

Its subcellular location is the cytoplasm. In terms of biological role, involved in the stabilization of the sigma stress factor RpoS. The polypeptide is Anti-adapter protein IraM (Citrobacter koseri (strain ATCC BAA-895 / CDC 4225-83 / SGSC4696)).